Reading from the N-terminus, the 511-residue chain is uncharacterized protein (511 aa).

A run of 14 helical transmembrane segments spans residues 7–27 (WVISLLAVLAVGPGLMSNTAL), 46–66 (VNPILIGNMAFALLVPAGPLL), 80–100 (LPVFILGSLLIACSGDIALMA), 107–127 (GAATGVMLMIMIPMLVLSFPI), 134–154 (LLVLIGGFYGSVIIGTILGTI), 163–183 (WLFFIFGTLSLIGVAVSYFFL), 200–220 (AGILLSVFLAAASAVSFIFLQ), 226–246 (SGYVWIGFGVTLCLLIGLLIV), 266–286 (VLGLLIIAAGTITVAVSLSAF), 301–321 (LILLSLTLLIGVAIAAILSAL), 329–349 (GMLGIIGGLILVFVNFQWLHI), 357–377 (MFAALFIMLAAGTGLTVAAGL), 394–414 (TAVQFLRLFVYMGVPILIGFF), and 437–457 (LFFISFILSVLLVCLSFCMNA). The segment at 465 to 486 (AHKPHDKAKTAPEKPAVSAQGL) is disordered.

Belongs to the major facilitator superfamily.

It is found in the cell membrane. This is an uncharacterized protein from Bacillus subtilis (strain 168).